The primary structure comprises 295 residues: Ethanolamine ammonia-lyase small subunit (295 aa).

Adenosylcob(III)alamin contacts are provided by Val-207, Glu-228, and Cys-258.

This sequence belongs to the EutC family. As to quaternary structure, the basic unit is a heterodimer which dimerizes to form tetramers. The heterotetramers trimerize; 6 large subunits form a core ring with 6 small subunits projecting outwards. Adenosylcob(III)alamin serves as cofactor.

Its subcellular location is the bacterial microcompartment. It carries out the reaction ethanolamine = acetaldehyde + NH4(+). Its pathway is amine and polyamine degradation; ethanolamine degradation. Catalyzes the deamination of various vicinal amino-alcohols to oxo compounds. Allows this organism to utilize ethanolamine as the sole source of nitrogen and carbon in the presence of external vitamin B12. The polypeptide is Ethanolamine ammonia-lyase small subunit (Escherichia coli O81 (strain ED1a)).